A 163-amino-acid chain; its full sequence is Large ribosomal subunit protein mL59 (163 aa).

The interval 33–53 (PAGADPETHKTPYQEESPNPF) is disordered.

It belongs to the mitochondrion-specific ribosomal protein mL59 family. In terms of assembly, component of the mitochondrial large ribosomal subunit (mt-LSU). Mature N.crassa 74S mitochondrial ribosomes consist of a small (37S) and a large (54S) subunit. The 37S small subunit contains a 16S ribosomal RNA (16S mt-rRNA) and 32 different proteins. The 54S large subunit contains a 23S rRNA (23S mt-rRNA) and 42 different proteins.

Its subcellular location is the mitochondrion. Functionally, component of the mitochondrial ribosome (mitoribosome), a dedicated translation machinery responsible for the synthesis of mitochondrial genome-encoded proteins, including at least some of the essential transmembrane subunits of the mitochondrial respiratory chain. The mitoribosomes are attached to the mitochondrial inner membrane and translation products are cotranslationally integrated into the membrane. This Neurospora crassa (strain ATCC 24698 / 74-OR23-1A / CBS 708.71 / DSM 1257 / FGSC 987) protein is Large ribosomal subunit protein mL59 (mrpl25).